We begin with the raw amino-acid sequence, 426 residues long: Cdc25-like protein phosphatase twine (426 aa).

Residues 1 to 27 (MASKRLMLDVEEEDDESGACGQENFDP) form a disordered region. One can recognise a Rhodanese domain in the interval 265–371 (SQGGYEIIDC…FFGLYSQLCQ (107 aa)). Residue Cys318 is part of the active site.

It belongs to the MPI phosphatase family. As to expression, expressed in developing male and female germ cells.

The catalysed reaction is O-phospho-L-tyrosyl-[protein] + H2O = L-tyrosyl-[protein] + phosphate. In terms of biological role, required during meiosis. Regulates the transition from the extended G2 phase to the onset of the first meiotic division. This is Cdc25-like protein phosphatase twine (twe) from Drosophila melanogaster (Fruit fly).